Reading from the N-terminus, the 250-residue chain is Adenosylcobinamide-GDP ribazoletransferase (250 aa).

6 consecutive transmembrane segments (helical) span residues 33-53 (IASY…LLYI), 63-83 (IVMT…HIDG), 109-129 (LGTN…LFLT), 137-157 (LTAL…SMMI), 180-200 (FAIA…LAVF), and 203-223 (ILTI…LRIG).

This sequence belongs to the CobS family. The cofactor is Mg(2+).

The protein localises to the cell membrane. The catalysed reaction is alpha-ribazole + adenosylcob(III)inamide-GDP = adenosylcob(III)alamin + GMP + H(+). It carries out the reaction alpha-ribazole 5'-phosphate + adenosylcob(III)inamide-GDP = adenosylcob(III)alamin 5'-phosphate + GMP + H(+). It functions in the pathway cofactor biosynthesis; adenosylcobalamin biosynthesis; adenosylcobalamin from cob(II)yrinate a,c-diamide: step 7/7. Functionally, joins adenosylcobinamide-GDP and alpha-ribazole to generate adenosylcobalamin (Ado-cobalamin). Also synthesizes adenosylcobalamin 5'-phosphate from adenosylcobinamide-GDP and alpha-ribazole 5'-phosphate. The chain is Adenosylcobinamide-GDP ribazoletransferase from Thermoanaerobacter pseudethanolicus (strain ATCC 33223 / 39E) (Clostridium thermohydrosulfuricum).